We begin with the raw amino-acid sequence, 116 residues long: Vesicle-associated membrane protein 5 (116 aa).

The Cytoplasmic segment spans residues 1 to 72 (MAGKELERCQ…RWENARCRIY (72 aa)). Positions 5–65 (ELERCQRQAD…KTLAQKKRWE (61 aa)) constitute a v-SNARE coiled-coil homology domain. Phosphoserine is present on residues Ser41, Ser48, and Ser49. A helical; Anchor for type IV membrane protein transmembrane segment spans residues 73–93 (MGLAVGIALLILLIVLLVIFL). Residues 94-116 (PQSSKGSSAPQVQDAGPASGPGE) lie on the Vesicular side of the membrane. A disordered region spans residues 97–116 (SKGSSAPQVQDAGPASGPGE).

Belongs to the synaptobrevin family.

It localises to the cell membrane. The protein localises to the endomembrane system. It is found in the golgi apparatus. The protein resides in the trans-Golgi network membrane. May participate in trafficking events that are associated with myogenesis, such as myoblast fusion and/or GLUT4 trafficking. The polypeptide is Vesicle-associated membrane protein 5 (VAMP5) (Bos taurus (Bovine)).